The sequence spans 199 residues: Recombination protein RecR (199 aa).

The segment at 57–72 adopts a C4-type zinc-finger fold; it reads CQSCRTYTEETLCPIC. The 96-residue stretch at 81-176 folds into the Toprim domain; it reads STICVVETPA…MISRIAHGVP (96 aa).

It belongs to the RecR family.

May play a role in DNA repair. It seems to be involved in an RecBC-independent recombinational process of DNA repair. It may act with RecF and RecO. In Shewanella baltica (strain OS195), this protein is Recombination protein RecR.